Consider the following 128-residue polypeptide: Large ribosomal subunit protein bL17 (128 aa).

This sequence belongs to the bacterial ribosomal protein bL17 family. In terms of assembly, part of the 50S ribosomal subunit. Contacts protein L32.

This chain is Large ribosomal subunit protein bL17, found in Pseudomonas savastanoi pv. phaseolicola (strain 1448A / Race 6) (Pseudomonas syringae pv. phaseolicola (strain 1448A / Race 6)).